The following is a 281-amino-acid chain: Putative pyruvate, phosphate dikinase regulatory protein (281 aa).

153–160 (GISRTSKT) is an ADP binding site.

This sequence belongs to the pyruvate, phosphate/water dikinase regulatory protein family. PDRP subfamily.

It carries out the reaction N(tele)-phospho-L-histidyl/L-threonyl-[pyruvate, phosphate dikinase] + ADP = N(tele)-phospho-L-histidyl/O-phospho-L-threonyl-[pyruvate, phosphate dikinase] + AMP + H(+). It catalyses the reaction N(tele)-phospho-L-histidyl/O-phospho-L-threonyl-[pyruvate, phosphate dikinase] + phosphate + H(+) = N(tele)-phospho-L-histidyl/L-threonyl-[pyruvate, phosphate dikinase] + diphosphate. Functionally, bifunctional serine/threonine kinase and phosphorylase involved in the regulation of the pyruvate, phosphate dikinase (PPDK) by catalyzing its phosphorylation/dephosphorylation. In Bdellovibrio bacteriovorus (strain ATCC 15356 / DSM 50701 / NCIMB 9529 / HD100), this protein is Putative pyruvate, phosphate dikinase regulatory protein.